The chain runs to 117 residues: Larval cuticle protein A2B (117 aa).

Residues 12–15 form repeat 1; the sequence is AAPV. Residues 29-95 enclose the Chitin-binding type R&amp;R domain; that stretch reads HPQYQYGYDV…AVVHREPLVA (67 aa). Residues 108 to 111 form repeat 2; sequence AAPV.

In terms of biological role, component of the cuticle of the larva of Tenebrio molitor. The protein is Larval cuticle protein A2B of Tenebrio molitor (Yellow mealworm beetle).